The chain runs to 270 residues: MATYVVGDLHGCFDELQLLLKQVNYNPAQDELWLTGDLVARGAKSLECLRFVKDPKNNAKTILGNHDLHLLATLLGIKKVKPNDQVDAIFAAEDRADLQNWLRNQPLLIQHPKYGFLLTHAGISPEWNLTETIACAREAEAVLQSGHYADYIAQMYENTPDHWSAEWQGIERWRYIINVFTRMRFCYADKRLDFACKLPVEDAPNELKPWFKLDNPLFHQQDIIFGHWASLMGKADKPNIYALDTGCAWGNHLTMIRWEDKQIFTQERLK.

This sequence belongs to the Ap4A hydrolase family.

The catalysed reaction is P(1),P(4)-bis(5'-adenosyl) tetraphosphate + H2O = 2 ADP + 2 H(+). Its function is as follows. Hydrolyzes diadenosine 5',5'''-P1,P4-tetraphosphate to yield ADP. The protein is Bis(5'-nucleosyl)-tetraphosphatase, symmetrical of Actinobacillus pleuropneumoniae serotype 3 (strain JL03).